We begin with the raw amino-acid sequence, 1165 residues long: Activity-dependent neuroprotector homeobox protein 2 (1165 aa).

A C2H2-type 1 zinc finger spans residues 73–96; it reads YCCSLCRYSTKVLTSLKNHLHRYH. The C2H2-type 2; degenerate zinc finger occupies 106 to 128; that stretch reads IPCPNCPFSSQPRVVGKHFRMFH. Lys146 is covalently cross-linked (Glycyl lysine isopeptide (Lys-Gly) (interchain with G-Cter in SUMO2)). Residues 155 to 178 form a C2H2-type 3; degenerate zinc finger; that stretch reads FTCLKCNFSNTLYYSMKKHVLVAH. Residues 215–240 form a C2H2-type 4 zinc finger; the sequence is YYCKKCSAIASSQDALMYHILTSDAH. The span at 303–318 shows a compositional bias: low complexity; that stretch reads SGTVQSVTVTPGTSGS. Positions 303–327 are disordered; the sequence is SGTVQSVTVTPGTSGSLTHSPPTTA. Residues 696–718 form a C2H2-type 5; degenerate zinc finger; it reads KTCPVCNELFPSNVYQVHMEVAH. The C2H2-type 6; degenerate zinc finger occupies 724 to 746; it reads QLCQVCNELFPANVYQVHMEVAH. The C2H2-type 7; degenerate zinc finger occupies 777–798; sequence VRCLSCKCLVSQEELMHHLLMH. 2 consecutive C2H2-type zinc fingers follow at residues 800–823 and 905–935; these read LGCL…RTKH and LTCP…PTVH. The disordered stretch occupies residues 1005–1068; the sequence is PVKRKLPEGH…SGPSEDSLQA (64 aa). Residues Lys1009 and Lys1048 each participate in a glycyl lysine isopeptide (Lys-Gly) (interchain with G-Cter in SUMO2) cross-link. A compositionally biased stretch (basic and acidic residues) spans 1009-1024; the sequence is KLPEGHLGPEDQRDGE. A DNA-binding region (homeobox) is located at residues 1090–1132; it reads DYFHRRPYPSRKEVELLSSLLWVWKIDVASFFGKRRYICMKAI.

The protein belongs to the krueppel C2H2-type zinc-finger protein family. As to quaternary structure, may interact with SMARCA4/BRG1. Expressed widely, with the highest level in the brain.

The protein localises to the nucleus. Its function is as follows. May be involved in transcriptional regulation. May play a role in neuronal function; perhaps involved in protection of brain tissues from oxidative stress. May be involved in erythroid differentiation. This chain is Activity-dependent neuroprotector homeobox protein 2 (Adnp2), found in Mus musculus (Mouse).